Here is an 828-residue protein sequence, read N- to C-terminus: Protein TAPT1 homolog (828 aa).

Low complexity-rich tracts occupy residues 67–83 (NNNNNNNSNNVSSGNHI), 212–233 (QQTQPQPQPQTQTTQQPSSQQP), and 302–321 (SNNNDNNDNNNNNNSKNNNN). Disordered stretches follow at residues 67–92 (NNNNNNNSNNVSSGNHITNSNSNSSG), 212–236 (QQTQPQPQPQTQTTQQPSSQQPFSY), and 297–346 (QTTP…TSSI). Transmembrane regions (helical) follow at residues 428–448 (ISFGFLVCFDSFLFLFTFLPI), 472–492 (QIFDLFRGFIWVTCFVFLNFI), 562–582 (ILGPFTHLLVATGYVCLHSLV), 722–742 (SSWGVNNIIGFVPFPLASIVV), and 754–774 (IFGIFLMVQIYICLVLLKIFI). A compositionally biased stretch (low complexity) spans 797–822 (LSSSSSSSSSNSLNTTSTTSTSTSTT). The tract at residues 797–828 (LSSSSSSSSSNSLNTTSTTSTSTSTTNDKKNN) is disordered.

Belongs to the TAPT1 family.

It localises to the membrane. The protein is Protein TAPT1 homolog of Dictyostelium discoideum (Social amoeba).